A 145-amino-acid chain; its full sequence is Antimicrobial peptide NK-lysin (145 aa).

The signal sequence occupies residues 1–22; sequence MTSRALLLLASALLGTPGLTFS. Positions 23-62 are excised as a propeptide; that stretch reads GLNPESYDLATAHLSDGEQFCQGLTQEDLQGDLLTERERQ. A Saposin B-type domain is found at 62-142; that stretch reads QGIACWSCRK…VDIKLCKHKA (81 aa). Intrachain disulfides connect Cys66/Cys138, Cys69/Cys132, and Cys97/Cys107. Residues 141-145 constitute a propeptide that is removed on maturation; that stretch reads KAGLI.

The protein localises to the secreted. Its function is as follows. May be an effector molecule of cytotoxic activity. Has antimicrobial activity. The sequence is that of Antimicrobial peptide NK-lysin (NKL) from Equus caballus (Horse).